The sequence spans 454 residues: Immediate-early protein ICP-46 homolog (454 aa).

Positions 330–357 (EKDIETIEKYEKTIQELIVELHNLYLKR) form a coiled coil. The disordered stretch occupies residues 428–454 (SSPTASLSSLSPPSSNNNSPIRSPIRM).

This sequence belongs to the IIV-6 393L family.

This chain is Immediate-early protein ICP-46 homolog, found in Invertebrate iridescent virus 6 (IIV-6).